A 247-amino-acid polypeptide reads, in one-letter code: Ribosomal RNA small subunit methyltransferase G (247 aa).

Residues G84, F89, 136–137 (AE), and R155 contribute to the S-adenosyl-L-methionine site.

Belongs to the methyltransferase superfamily. RNA methyltransferase RsmG family.

It is found in the cytoplasm. Specifically methylates the N7 position of a guanine in 16S rRNA. The protein is Ribosomal RNA small subunit methyltransferase G of Prochlorococcus marinus (strain MIT 9303).